The primary structure comprises 486 residues: Protein pleiotropic regulatory locus 1 (486 aa).

The tract at residues 62–101 (EPVVSQPPRQPDRINEQPGPSNALSLAAPEGSKSTQKGAT) is disordered. 7 WD repeats span residues 174–204 (GHLG…KIWD), 216–246 (GHIE…KCWD), 258–288 (GHLS…RVWD), 300–330 (GHDN…KFWD), 342–371 (HHKK…KKFS), 384–413 (QQKT…WFWD), and 433–463 (ESEA…KMWK). 2 consecutive short sequence motifs (DWD box) follow at residues 275–290 (LLTG…WDIR) and 317–332 (VVTG…WDLR). Residues 465–486 (DENATPETHPINFKPPKEIRRF) form a disordered region.

Belongs to the WD repeat PRL1/PRL2 family. Component of the multiprotein assembly MOS4-associated complex (MAC) at least composed of MOS4, CDC5, PRL1 and PRP19. Interacts with CDC5. Component of the CUL4-RBX1-DDB1-PRL1 E3 ubiquitin-protein ligase complex. Interacts with DDB1A through its DWD motif. Interacts with AKIN10, AKIN11 and PIPC. Interacts with KAP2.

Its subcellular location is the nucleus. It functions in the pathway protein modification; protein ubiquitination. Its function is as follows. Pleiotropic regulator of glucose, stress and hormone responses. Also regulates cytochrome P450 CYP90A1/CPD. Coordinates the expression of hormone- and stress-related genes and genes related to cell wall modification and growth, leading to altered sugar-dependent growth and developmental responses. Component of the MAC complex that probably regulates defense responses through transcriptional control and thereby is essential for plant innate immunity. By suppressing the expression of several (1)O(2)-responsive genes, PRL1 seems to play a major role in modulating responses of plants to environmental changes by interconnecting (1)O(2)-mediated retrograde signaling with other signaling pathways. Acts as a negative regulator of SNF1-related protein kinases AKIN10 and AKIN11 via the inhibition of their interaction with SKP1/ASK1. Component of the CUL4-RBX1-DDB1-PRL1 E3 ubiquitin-protein ligase complex, PRL1 may function as the substrate recognition module within this complex, leading to the AKIN10 degradation. The polypeptide is Protein pleiotropic regulatory locus 1 (PRL1) (Arabidopsis thaliana (Mouse-ear cress)).